The primary structure comprises 569 residues: Cationic amino acid transporter 5 (569 aa).

Residues Met-1–Cys-67 lie on the Cytoplasmic side of the membrane. Residues Leu-68 to Val-88 form a helical membrane-spanning segment. Residues Leu-89–Gln-97 lie on the Extracellular side of the membrane. The chain crosses the membrane as a helical span at residues Ala-98 to Phe-118. Residues Cys-119 to Asp-143 lie on the Cytoplasmic side of the membrane. Residues Phe-144–Val-164 form a helical membrane-spanning segment. Residues Ala-165–Gly-192 lie on the Extracellular side of the membrane. Residues Phe-193–Ile-213 form a helical membrane-spanning segment. Residues Ser-214–Asn-222 lie on the Cytoplasmic side of the membrane. Residues Trp-223–His-243 form a helical membrane-spanning segment. Topologically, residues Ala-244–Pro-251 are extracellular. A helical membrane pass occupies residues Phe-252–Gly-272. Over Gly-273 to Asp-290 the chain is Cytoplasmic. Residues Ile-291–Leu-311 form a helical membrane-spanning segment. Residues Ser-312–Lys-341 are Extracellular-facing. Residues Tyr-342 to Gly-362 traverse the membrane as a helical segment. Over Gln-363–Thr-389 the chain is Cytoplasmic. The helical transmembrane segment at Pro-390–Leu-410 threads the bilayer. Asp-411 is a topological domain (extracellular). Residues Val-412–Leu-432 form a helical membrane-spanning segment. The Cytoplasmic segment spans residues Leu-433 to Lys-450. The chain crosses the membrane as a helical span at residues Leu-451–Met-471. Residues Gln-472–Trp-477 lie on the Extracellular side of the membrane. The helical transmembrane segment at Ile-478 to Val-498 threads the bilayer. The Cytoplasmic segment spans residues Pro-499 to Lys-505. The helical transmembrane segment at Val-506–Leu-526 threads the bilayer. The Extracellular segment spans residues Met-527–Arg-537. A helical transmembrane segment spans residues Phe-538–Phe-558. The Cytoplasmic portion of the chain corresponds to Asp-559 to Thr-569.

This sequence belongs to the amino acid-polyamine-organocation (APC) superfamily. Cationic amino acid transporter (CAT) (TC 2.A.3.3) family. As to expression, expressed in roots, stems, flowers, seeds, and leaves. Mostly present in leaf rims and cotyledons of developing seedlings.

The protein localises to the cell membrane. Functionally, high-affinity permease involved in the transport of the cationic amino acids (e.g. arginine, and, to a lower extent, citrulline and glutamate). Transport mostly basic amino acids, and, to a lower extent neutral and acidic amino acids. In Arabidopsis thaliana (Mouse-ear cress), this protein is Cationic amino acid transporter 5 (CAT5).